The following is a 907-amino-acid chain: Avirulence protein A (907 aa).

2 stretches are compositionally biased toward polar residues: residues 1 to 11 (MWNVSKSSNNL) and 124 to 136 (AGSN…SSDP). Disordered regions lie at residues 1-47 (MWNV…HDQL) and 116-157 (NDDF…KKSY).

This chain is Avirulence protein A (avrA), found in Pseudomonas savastanoi pv. glycinea (Pseudomonas syringae pv. glycinea).